The primary structure comprises 302 residues: Spheroidin-like protein (302 aa).

The signal sequence occupies residues 1–19 (MIALLIALFAAIHAPAVRS). Residues N193 and N293 are each glycosylated (N-linked (GlcNAc...) asparagine; by host).

In terms of assembly, homodimer; disulfide-linked.

The protein localises to the host membrane. Functionally, component of the virus occlusion bodies, which are large proteinaceous structures (polyhedra), that protect the virus from the outside environment for extended periods until they are ingested by insect larvae. The chain is Spheroidin-like protein (SLP) from Autographa californica nuclear polyhedrosis virus (AcMNPV).